The chain runs to 353 residues: Holliday junction branch migration complex subunit RuvB (353 aa).

Residues 1–183 are large ATPase domain (RuvB-L); it reads MNEPRIVAPQ…FGATYRLDFY (183 aa). ATP-binding positions include L22, R23, G64, K67, T68, T69, 130–132, R173, Y183, and R220; that span reads EDF. Residue T68 participates in Mg(2+) binding. Residues 184–254 form a small ATPAse domain (RuvB-S) region; it reads DTAALRAIVE…LARLALDQLA (71 aa). Residues 257–353 are head domain (RuvB-H); sequence ELGLDEVDRL…HAASERSSDA (97 aa). DNA-binding residues include R312 and R317.

The protein belongs to the RuvB family. Homohexamer. Forms an RuvA(8)-RuvB(12)-Holliday junction (HJ) complex. HJ DNA is sandwiched between 2 RuvA tetramers; dsDNA enters through RuvA and exits via RuvB. An RuvB hexamer assembles on each DNA strand where it exits the tetramer. Each RuvB hexamer is contacted by two RuvA subunits (via domain III) on 2 adjacent RuvB subunits; this complex drives branch migration. In the full resolvosome a probable DNA-RuvA(4)-RuvB(12)-RuvC(2) complex forms which resolves the HJ.

It is found in the cytoplasm. It carries out the reaction ATP + H2O = ADP + phosphate + H(+). Its function is as follows. The RuvA-RuvB-RuvC complex processes Holliday junction (HJ) DNA during genetic recombination and DNA repair, while the RuvA-RuvB complex plays an important role in the rescue of blocked DNA replication forks via replication fork reversal (RFR). RuvA specifically binds to HJ cruciform DNA, conferring on it an open structure. The RuvB hexamer acts as an ATP-dependent pump, pulling dsDNA into and through the RuvAB complex. RuvB forms 2 homohexamers on either side of HJ DNA bound by 1 or 2 RuvA tetramers; 4 subunits per hexamer contact DNA at a time. Coordinated motions by a converter formed by DNA-disengaged RuvB subunits stimulates ATP hydrolysis and nucleotide exchange. Immobilization of the converter enables RuvB to convert the ATP-contained energy into a lever motion, pulling 2 nucleotides of DNA out of the RuvA tetramer per ATP hydrolyzed, thus driving DNA branch migration. The RuvB motors rotate together with the DNA substrate, which together with the progressing nucleotide cycle form the mechanistic basis for DNA recombination by continuous HJ branch migration. Branch migration allows RuvC to scan DNA until it finds its consensus sequence, where it cleaves and resolves cruciform DNA. In Thermomicrobium roseum (strain ATCC 27502 / DSM 5159 / P-2), this protein is Holliday junction branch migration complex subunit RuvB.